Here is a 227-residue protein sequence, read N- to C-terminus: 2-C-methyl-D-erythritol 4-phosphate cytidylyltransferase (227 aa).

This sequence belongs to the IspD/TarI cytidylyltransferase family. IspD subfamily.

The enzyme catalyses 2-C-methyl-D-erythritol 4-phosphate + CTP + H(+) = 4-CDP-2-C-methyl-D-erythritol + diphosphate. Its pathway is isoprenoid biosynthesis; isopentenyl diphosphate biosynthesis via DXP pathway; isopentenyl diphosphate from 1-deoxy-D-xylulose 5-phosphate: step 2/6. Catalyzes the formation of 4-diphosphocytidyl-2-C-methyl-D-erythritol from CTP and 2-C-methyl-D-erythritol 4-phosphate (MEP). The chain is 2-C-methyl-D-erythritol 4-phosphate cytidylyltransferase from Dehalococcoides mccartyi (strain CBDB1).